The primary structure comprises 545 residues: Chaperonin GroEL 2 (545 aa).

ATP contacts are provided by residues 29 to 32 (TLGP), 86 to 90 (DGTTT), glycine 413, 479 to 481 (NAA), and aspartate 495.

The protein belongs to the chaperonin (HSP60) family. As to quaternary structure, forms a cylinder of 14 subunits composed of two heptameric rings stacked back-to-back. Interacts with the co-chaperonin GroES.

The protein localises to the cytoplasm. It carries out the reaction ATP + H2O + a folded polypeptide = ADP + phosphate + an unfolded polypeptide.. In terms of biological role, together with its co-chaperonin GroES, plays an essential role in assisting protein folding. The GroEL-GroES system forms a nano-cage that allows encapsulation of the non-native substrate proteins and provides a physical environment optimized to promote and accelerate protein folding. The sequence is that of Chaperonin GroEL 2 from Prochlorococcus marinus (strain SARG / CCMP1375 / SS120).